The primary structure comprises 285 residues: Nucleotide-binding protein Gmet_1286 (285 aa).

ATP is bound at residue 8-15 (GLSGSGKS). 59–62 (DIRG) contributes to the GTP binding site.

Belongs to the RapZ-like family.

Its function is as follows. Displays ATPase and GTPase activities. The protein is Nucleotide-binding protein Gmet_1286 of Geobacter metallireducens (strain ATCC 53774 / DSM 7210 / GS-15).